We begin with the raw amino-acid sequence, 510 residues long: MYELHIKPGQLTLSQLRKISRHALKVSLESSCIEAIHASTQVVNQVIAENRVAYGINTGFGLLANTRIAPEDLETLQRSIVLSHAAGIGELMNDETVRMMMVLKINSLARGFSGIRLSVIEALMTLVNAQIYPCVPKKGSVGASGDLAPLAHMSTVLLGEGEARYQGNIISGAKALEIAGMQPITLAPKEGLALLNGTQASCAFGLEGLFAAEDLFASATLCGAMTVDAALGSRRPFDDRVHQVRGHQSQIDSALIYRHILDTHSEVSHSHTACEKVQDPYSLRCQPQVMGACLQQIRNSAAIYEIEANSVSDNPLVFAEDGDIISAGNFHAEPIAMASDNLALAIAEIGSLSERRMALLIDNSLSKLPPFLVNNGGVNSGFMIAQVTAAALASENKSLAHPACVDSLPTSANQEDHVSMATFAGRRLKEMAENTRGILAVELLAAAQGLDFRSPLKSSELIETAKAELRERVDFYDKDRYFAPDIKQANQLLIEAMHNKLIPEGLLPSL.

Positions 143 to 145 form a cross-link, 5-imidazolinone (Ala-Gly); sequence ASG. Ser-144 is modified (2,3-didehydroalanine (Ser)).

The protein belongs to the PAL/histidase family. In terms of processing, contains an active site 4-methylidene-imidazol-5-one (MIO), which is formed autocatalytically by cyclization and dehydration of residues Ala-Ser-Gly.

The protein localises to the cytoplasm. The enzyme catalyses L-histidine = trans-urocanate + NH4(+). Its pathway is amino-acid degradation; L-histidine degradation into L-glutamate; N-formimidoyl-L-glutamate from L-histidine: step 1/3. The sequence is that of Histidine ammonia-lyase from Psychromonas ingrahamii (strain DSM 17664 / CCUG 51855 / 37).